The sequence spans 334 residues: Tryptophan--tRNA ligase (334 aa).

ATP-binding positions include 11 to 13 (QPT) and 19 to 20 (GN). The short motif at 12–20 (PTGKLTIGN) is the 'HIGH' region element. Asp135 is an L-tryptophan binding site. Residues 147-149 (GED), Ile186, and 195-199 (KMSKS) each bind ATP. Positions 195–199 (KMSKS) match the 'KMSKS' region motif.

This sequence belongs to the class-I aminoacyl-tRNA synthetase family. In terms of assembly, homodimer.

The protein localises to the cytoplasm. The catalysed reaction is tRNA(Trp) + L-tryptophan + ATP = L-tryptophyl-tRNA(Trp) + AMP + diphosphate + H(+). Catalyzes the attachment of tryptophan to tRNA(Trp). The polypeptide is Tryptophan--tRNA ligase (Blochmanniella floridana).